The sequence spans 263 residues: Nucleoside triphosphate pyrophosphohydrolase (263 aa).

Residues 168–172 (KVYEE), glutamate 175, and 189–192 (KLEE) each bind ATP. The Mg(2+) site is built by glutamate 172 and glutamate 175. Glutamate 193 and aspartate 196 together coordinate Mg(2+). ATP contacts are provided by residues aspartate 196, 222 to 226 (KFERR), and tryptophan 253.

This sequence belongs to the nucleoside triphosphate pyrophosphohydrolase family. As to quaternary structure, homodimer. It depends on Mg(2+) as a cofactor.

The enzyme catalyses ATP + H2O = AMP + diphosphate + H(+). Functionally, involved in the regulation of bacterial cell survival under conditions of nutritional stress. Regulates the MazE-MazF toxin-antitoxin (TA) system that mediates programmed cell death (PCD). This is achieved by lowering the cellular concentration of (p)ppGpp produced by RelA under amino acid starvation, thus protecting the cell from the toxicity of MazF. Reduction of (p)ppGpp can be achieved by direct degradation of (p)ppGpp or by degradation of NTPs, which are substrates for (p)ppGpp synthesis by RelA. The chain is Nucleoside triphosphate pyrophosphohydrolase (mazG) from Escherichia coli O157:H7.